The following is an 874-amino-acid chain: DNA mismatch repair protein MutS (874 aa).

613–620 (GPNMGGKS) is a binding site for ATP. The tract at residues 799-820 (EAGSTPSPAPVSVNEPKPAAPT) is disordered.

This sequence belongs to the DNA mismatch repair MutS family.

In terms of biological role, this protein is involved in the repair of mismatches in DNA. It is possible that it carries out the mismatch recognition step. This protein has a weak ATPase activity. The polypeptide is DNA mismatch repair protein MutS (Marinobacter nauticus (strain ATCC 700491 / DSM 11845 / VT8) (Marinobacter aquaeolei)).